We begin with the raw amino-acid sequence, 305 residues long: Glutaminase (305 aa).

Substrate is bound by residues Ser-61, Asn-113, Glu-158, Asn-165, Tyr-189, Tyr-241, and Val-259.

Belongs to the glutaminase family. Homotetramer.

It carries out the reaction L-glutamine + H2O = L-glutamate + NH4(+). The chain is Glutaminase from Clostridium botulinum (strain Loch Maree / Type A3).